Here is a 250-residue protein sequence, read N- to C-terminus: Probable transcriptional regulatory protein MAP_1030 (250 aa).

Belongs to the TACO1 family.

The protein resides in the cytoplasm. The polypeptide is Probable transcriptional regulatory protein MAP_1030 (Mycolicibacterium paratuberculosis (strain ATCC BAA-968 / K-10) (Mycobacterium paratuberculosis)).